Here is a 289-residue protein sequence, read N- to C-terminus: UPF0761 membrane protein ESA_04062 (289 aa).

6 helical membrane passes run 44–64 (LLSL…FPMF), 104–124 (VGAL…DSAL), 140–160 (FAVY…SLVI), 183–203 (IFPL…VPTT), 215–235 (LVAA…ITMF), and 244–264 (VLAV…IVLL).

Belongs to the UPF0761 family.

Its subcellular location is the cell inner membrane. The polypeptide is UPF0761 membrane protein ESA_04062 (Cronobacter sakazakii (strain ATCC BAA-894) (Enterobacter sakazakii)).